The primary structure comprises 208 residues: T-cell surface glycoprotein CD8 beta chain (208 aa).

Residues methionine 1–alanine 21 form the signal peptide. The Ig-like V-type domain maps to leucine 22–leucine 131. Over leucine 22–leucine 168 the chain is Extracellular. Residues asparagine 34, asparagine 88, and asparagine 94 are each glycosylated (N-linked (GlcNAc...) asparagine). Cysteine 41 and cysteine 115 are joined by a disulfide. The helical transmembrane segment at isoleucine 169–isoleucine 189 threads the bilayer. The Cytoplasmic segment spans residues histidine 190–lysine 208.

In terms of assembly, forms disulfide-linked heterodimers with CD8A at the cell surface. Interacts with CD3D; this interaction couples TCR-CD3 with CD8. Interacts with LCK. Post-translationally, phosphorylated as a consequence of T-cell activation. Palmitoylated at the cytoplasmic tail and thereby targets the heterodimer CD8A/CD8B to lipid rafts unlike CD8A homodimers.

The protein localises to the cell membrane. Functionally, integral membrane glycoprotein that plays an essential role in the immune response and serves multiple functions in responses against both external and internal offenses. In T-cells, functions primarily as a coreceptor for MHC class I molecule:peptide complex. The antigens presented by class I peptides are derived from cytosolic proteins while class II derived from extracellular proteins. Interacts simultaneously with the T-cell receptor (TCR) and the MHC class I proteins presented by antigen presenting cells (APCs). In turn, recruits the Src kinase LCK to the vicinity of the TCR-CD3 complex. A palmitoylation site in the cytoplasmic tail of CD8B chain contributes to partitioning of CD8 into the plasma membrane lipid rafts where signaling proteins are enriched. Once LCK recruited, it initiates different intracellular signaling pathways by phosphorylating various substrates ultimately leading to lymphokine production, motility, adhesion and activation of cytotoxic T-lymphocytes (CTLs). Additionally, plays a critical role in thymic selection of CD8+ T-cells. The polypeptide is T-cell surface glycoprotein CD8 beta chain (Cd8b) (Rattus norvegicus (Rat)).